Here is a 238-residue protein sequence, read N- to C-terminus: Pyridoxine 5'-phosphate synthase (238 aa).

Position 9 (asparagine 9) interacts with 3-amino-2-oxopropyl phosphate. 1-deoxy-D-xylulose 5-phosphate is bound at residue 11–12 (DH). Residue arginine 20 participates in 3-amino-2-oxopropyl phosphate binding. Residue histidine 45 is the Proton acceptor of the active site. Arginine 47 and histidine 52 together coordinate 1-deoxy-D-xylulose 5-phosphate. The active-site Proton acceptor is the glutamate 72. A 1-deoxy-D-xylulose 5-phosphate-binding site is contributed by threonine 102. Histidine 189 functions as the Proton donor in the catalytic mechanism. Residues glycine 190 and 211–212 (GH) contribute to the 3-amino-2-oxopropyl phosphate site.

It belongs to the PNP synthase family. In terms of assembly, homooctamer; tetramer of dimers.

The protein resides in the cytoplasm. The catalysed reaction is 3-amino-2-oxopropyl phosphate + 1-deoxy-D-xylulose 5-phosphate = pyridoxine 5'-phosphate + phosphate + 2 H2O + H(+). Its pathway is cofactor biosynthesis; pyridoxine 5'-phosphate biosynthesis; pyridoxine 5'-phosphate from D-erythrose 4-phosphate: step 5/5. In terms of biological role, catalyzes the complicated ring closure reaction between the two acyclic compounds 1-deoxy-D-xylulose-5-phosphate (DXP) and 3-amino-2-oxopropyl phosphate (1-amino-acetone-3-phosphate or AAP) to form pyridoxine 5'-phosphate (PNP) and inorganic phosphate. This is Pyridoxine 5'-phosphate synthase from Ehrlichia canis (strain Jake).